Reading from the N-terminus, the 194-residue chain is Small ribosomal subunit protein uS7 (194 aa).

Belongs to the universal ribosomal protein uS7 family. As to quaternary structure, part of the 30S ribosomal subunit.

In terms of biological role, one of the primary rRNA binding proteins, it binds directly to 16S rRNA where it nucleates assembly of the head domain of the 30S subunit. Is located at the subunit interface close to the decoding center. This Archaeoglobus fulgidus (strain ATCC 49558 / DSM 4304 / JCM 9628 / NBRC 100126 / VC-16) protein is Small ribosomal subunit protein uS7.